Reading from the N-terminus, the 315-residue chain is Cell division protein FtsZ (315 aa).

GTP contacts are provided by residues G55–G57, E98, R102, and D146.

It belongs to the FtsZ family. In terms of assembly, homodimer. Polymerizes to form a dynamic ring structure in a strictly GTP-dependent manner. Interacts directly with several other division proteins.

The protein resides in the cytoplasm. Its function is as follows. Essential cell division protein that forms a contractile ring structure (Z ring) at the future cell division site. The regulation of the ring assembly controls the timing and the location of cell division. One of the functions of the FtsZ ring is to recruit other cell division proteins to the septum to produce a new cell wall between the dividing cells. Binds GTP and shows GTPase activity. This Wolbachia pipientis protein is Cell division protein FtsZ.